The primary structure comprises 404 residues: MKLPIYLDYSATTPVDPRVAEKMMNYLTRDGIFGNPASRSHRFGWQAEEAVDIARNQIADLVGADPREIVFTSGATESDNLAIKGAANFYQKKGKHIITSKTEHKAVLDTCRQLEREGFEVTYLAPQSNGLIDLNDLEAAVRDDTILISIMHVNNEIGVVQDIAAIGEMCRSRGIVFHVDATQSVGKLPIDLTKLKVDLMSFSAHKIYGPMGIGALYVRRKPRIRIEAQQHGGGHERGMRSGTLPVHQIVGMGEAYRIAKQEMESESQRLRGLRLRLWQGIKDIEEVFLNGDLEHGAPHILNVSFNYVEGESLMMSLKDLAVSSGSACTSASLEPSYVLRALGMNDELAHSSIRFSLGRFTTEEEIDYAIELIHKSIGRLRELSPLWEMFRQGVDLNSIEWSHH.

Pyridoxal 5'-phosphate-binding positions include 75 to 76 (AT), asparagine 155, glutamine 183, and 203 to 205 (SAH). An N6-(pyridoxal phosphate)lysine modification is found at lysine 206. Threonine 243 contacts pyridoxal 5'-phosphate. The Cysteine persulfide intermediate role is filled by cysteine 328. Cysteine 328 serves as a coordination point for [2Fe-2S] cluster.

It belongs to the class-V pyridoxal-phosphate-dependent aminotransferase family. NifS/IscS subfamily. In terms of assembly, homodimer. Forms a heterotetramer with IscU, interacts with other sulfur acceptors. The cofactor is pyridoxal 5'-phosphate.

The protein localises to the cytoplasm. The enzyme catalyses (sulfur carrier)-H + L-cysteine = (sulfur carrier)-SH + L-alanine. It functions in the pathway cofactor biosynthesis; iron-sulfur cluster biosynthesis. Its function is as follows. Master enzyme that delivers sulfur to a number of partners involved in Fe-S cluster assembly, tRNA modification or cofactor biosynthesis. Catalyzes the removal of elemental sulfur atoms from cysteine to produce alanine. Functions as a sulfur delivery protein for Fe-S cluster synthesis onto IscU, an Fe-S scaffold assembly protein, as well as other S acceptor proteins. This Photorhabdus laumondii subsp. laumondii (strain DSM 15139 / CIP 105565 / TT01) (Photorhabdus luminescens subsp. laumondii) protein is Cysteine desulfurase IscS.